The following is an 856-amino-acid chain: Lon protease homolog 2, peroxisomal (856 aa).

In terms of domain architecture, Lon N-terminal spans 13 to 222 (LPLLLTHEGV…VTIPLLLRQI (210 aa)). 379–386 (GPPGVGKT) contributes to the ATP binding site. Basic and acidic residues predominate over residues 586–608 (GQHREHKSEHLEAPEGEERKESV). The disordered stretch occupies residues 586–614 (GQHREHKSEHLEAPEGEERKESVPEGSKS). Residues 655 to 841 (LNQPGVAIGL…DEVLNAAFDG (187 aa)) form the Lon proteolytic domain. Residues Ser-747 and Lys-790 contribute to the active site. Positions 854-856 (SKL) match the Microbody targeting signal motif.

Belongs to the peptidase S16 family.

Its subcellular location is the peroxisome matrix. The catalysed reaction is Hydrolysis of proteins in presence of ATP.. ATP-dependent serine protease that mediates the selective degradation of misfolded and unassembled polypeptides in the peroxisomal matrix. Necessary for type 2 peroxisome targeting signal (PTS2)-containing protein processing and facilitates peroxisome matrix protein import. The polypeptide is Lon protease homolog 2, peroxisomal (lonp2) (Xenopus laevis (African clawed frog)).